The sequence spans 1390 residues: DNA-directed RNA polymerase subunit beta (1390 aa).

The protein belongs to the RNA polymerase beta chain family. As to quaternary structure, the RNAP catalytic core consists of 2 alpha, 1 beta, 1 beta' and 1 omega subunit. When a sigma factor is associated with the core the holoenzyme is formed, which can initiate transcription.

The enzyme catalyses RNA(n) + a ribonucleoside 5'-triphosphate = RNA(n+1) + diphosphate. Its function is as follows. DNA-dependent RNA polymerase catalyzes the transcription of DNA into RNA using the four ribonucleoside triphosphates as substrates. In Mycoplasma genitalium (strain ATCC 33530 / DSM 19775 / NCTC 10195 / G37) (Mycoplasmoides genitalium), this protein is DNA-directed RNA polymerase subunit beta.